Consider the following 292-residue polypeptide: NAD kinase (292 aa).

Catalysis depends on Asp72, which acts as the Proton acceptor. NAD(+) is bound by residues 72 to 73 (DG), 146 to 147 (NE), His157, Arg174, Asp176, and 187 to 192 (TAYALS).

Belongs to the NAD kinase family. A divalent metal cation serves as cofactor.

Its subcellular location is the cytoplasm. It catalyses the reaction NAD(+) + ATP = ADP + NADP(+) + H(+). Its function is as follows. Involved in the regulation of the intracellular balance of NAD and NADP, and is a key enzyme in the biosynthesis of NADP. Catalyzes specifically the phosphorylation on 2'-hydroxyl of the adenosine moiety of NAD to yield NADP. The sequence is that of NAD kinase from Shewanella oneidensis (strain ATCC 700550 / JCM 31522 / CIP 106686 / LMG 19005 / NCIMB 14063 / MR-1).